The sequence spans 277 residues: Reaction center protein L chain (277 aa).

3 consecutive transmembrane segments (helical) span residues 30-52, 84-106, and 113-135; these read FYVGIFGVMTVFFALIGIALIAW, GGIWQWVSICATGAFVTWALREV, and GIGFHVPFAFSFAIFAYVTLVVI. Residues histidine 154 and histidine 174 each coordinate (7R,8Z)-bacteriochlorophyll b. A helical transmembrane segment spans residues 173 to 195; that stretch reads AHMIAITFFFTTCLALALHGGLV. Residue histidine 191 participates in Fe cation binding. Residue phenylalanine 217 participates in a ubiquinone binding. Residue histidine 231 coordinates Fe cation. A helical membrane pass occupies residues 233-255; the sequence is LGLFLALSAVFFSAVCMIISGPV.

The protein belongs to the reaction center PufL/M/PsbA/D family. As to quaternary structure, reaction center is composed of four bacteriochlorophylls, two bacteriopheophytins, two ubiquinones, one iron, and three highly hydrophobic polypeptide chains (designated L, M, and H).

Its subcellular location is the cellular chromatophore membrane. In terms of biological role, the reaction center is a membrane-bound complex that mediates the initial photochemical event in the electron transfer process of photosynthesis. The sequence is that of Reaction center protein L chain (pufL) from Rhodopseudomonas palustris (strain ATCC BAA-98 / CGA009).